Consider the following 195-residue polypeptide: COMM domain-containing protein 3 (195 aa).

Positions 124–193 (HITDVSWRLE…DASKSLERAT (70 aa)) constitute a COMM domain.

The protein belongs to the COMM domain-containing protein 3 family. Component of the commander complex consisting of the CCC subcomplex and the retriever subcomplex. Component of the CCC (COMMD/CCDC22/CCDC93) subcomplex consisting of COMMD1, COMMD2, COMMD3, COMMD4, COMMD5, COMMD6, COMMD7, COMMD8, COMMD9, COMMD10, CCDC22 and CCDC93; within the complex forms a heterodimer with COMMD2. Interacts with NFKB1/p105. Interacts with CCDC22, CCDC93, SCNN1B, CUL3, CUL4A, CUL4B, CUL5.

It is found in the cytoplasm. The protein localises to the nucleus. Functionally, scaffold protein in the commander complex that is essential for endosomal recycling of transmembrane cargos; the commander complex is composed of the CCC subcomplex and the retriever subcomplex. May modulate activity of cullin-RING E3 ubiquitin ligase (CRL) complexes. May down-regulate activation of NF-kappa-B. Modulates Na(+) transport in epithelial cells by regulation of apical cell surface expression of amiloride-sensitive sodium channel (ENaC) subunits. The chain is COMM domain-containing protein 3 (COMMD3) from Bos taurus (Bovine).